The sequence spans 633 residues: E3 ubiquitin-protein ligase ZSWIM2 (633 aa).

Residues 54–87 (FRVFLGNPHVCNCSTFPKGGELCKHICWVLLKKF) form an SWIM-type zinc finger. The segment at 147–198 (CSICQELLLEKKLPVTFCRFGCGNSIHIKCMKILANYQSTSNTSMLKCPLCR) adopts an RING-type 1 zinc-finger fold. Residues 229 to 280 (HLGIPCNNCKQFPIEGKCYKCTECIEYHLCQECFDSCCHLSHTFTFREKRNQ) form a ZZ-type zinc finger. Zn(2+) contacts are provided by cysteine 234, cysteine 237, cysteine 249, cysteine 252, cysteine 258, cysteine 261, histidine 267, and histidine 270. An RING-type 2 zinc finger spans residues 344–388 (CLLCLKAFHLGQHTRLLPCTHKFHRKCIDNWLFHKCNSCPIDGQV).

In terms of assembly, dimer. Interacts with UBE2D1. Polyubiquitinated. Polyubiquitination is followed by degradation via the proteasome. In terms of tissue distribution, expression is testis-specific.

It catalyses the reaction S-ubiquitinyl-[E2 ubiquitin-conjugating enzyme]-L-cysteine + [acceptor protein]-L-lysine = [E2 ubiquitin-conjugating enzyme]-L-cysteine + N(6)-ubiquitinyl-[acceptor protein]-L-lysine.. In terms of biological role, E3 ubiquitin-protein ligase involved in the regulation of Fas-, DR3- and DR4-mediated apoptosis. Functions in conjunction with the UBE2D1, UBE2D3 and UBE2E1 E2 ubiquitin-conjugating enzymes. This chain is E3 ubiquitin-protein ligase ZSWIM2, found in Homo sapiens (Human).